The following is a 2531-amino-acid chain: Neurogenic locus notch homolog protein 1 (2531 aa).

Residues 1-18 (MPRLLAPLLCLTLLPALA) form the signal peptide. At 19–1725 (ARGLRCSQPS…VEPPLPSQLH (1707 aa)) the chain is on the extracellular side. 4 consecutive EGF-like domains span residues 20–58 (RGLR…QRCQ), 59–99 (DPSP…PLCL), 102–139 (LANA…KSCQ), and 140–176 (QADP…PTCR). Disulfide bonds link Cys-24/Cys-37, Cys-31/Cys-46, Cys-48/Cys-57, Cys-63/Cys-74, Cys-68/Cys-87, Cys-89/Cys-98, Cys-106/Cys-117, Cys-111/Cys-127, Cys-129/Cys-138, Cys-144/Cys-155, Cys-149/Cys-164, Cys-166/Cys-175, Cys-182/Cys-195, Cys-189/Cys-204, Cys-206/Cys-215, Cys-222/Cys-233, Cys-227/Cys-243, Cys-245/Cys-254, Cys-261/Cys-272, Cys-266/Cys-281, Cys-283/Cys-292, Cys-299/Cys-312, Cys-306/Cys-321, Cys-323/Cys-332, Cys-339/Cys-350, Cys-344/Cys-359, Cys-361/Cys-370, Cys-376/Cys-387, Cys-381/Cys-398, Cys-400/Cys-409, Cys-416/Cys-429, Cys-423/Cys-438, and Cys-440/Cys-449. An N-linked (GlcNAc...) asparagine glycan is attached at Asn-41. Ser-65 carries an O-linked (Glc...) serine glycan. O-linked (Fuc...) threonine glycosylation occurs at Thr-73. Residue Thr-116 is glycosylated (O-linked (Fuc...) threonine). Residue Ser-146 is glycosylated (O-linked (Glc...) serine). The 39-residue stretch at 178–216 (DVNECSQNPGLCRHGGTCHNEIGSYRCACRATHTGPHCE) folds into the EGF-like 5; calcium-binding domain. A glycan (O-linked (Fuc...) threonine) is linked at Thr-194. The EGF-like 6 domain maps to 218–255 (PYVPCSPSPCQNGGTCRPTGDTTHECACLPGFAGQNCE). Residue Thr-232 is glycosylated (O-linked (Fuc...) threonine; alternate). A glycan (O-linked (GalNAc...) threonine; alternate) is linked at Thr-232. Positions 257–293 (NVDDCPGNNCKNGGACVDGVNTYNCRCPPEWTGQYCT) constitute an EGF-like 7; calcium-binding domain. One can recognise an EGF-like 8; calcium-binding domain in the interval 295–333 (DVDECQLMPNACQNGGTCHNSHGGYNCVCVNGWTGEDCS). An O-linked (Fuc...) threonine glycan is attached at Thr-311. In terms of domain architecture, EGF-like 9; calcium-binding spans 335–371 (NIDDCASAACFQGATCHDRVASFYCECPHGRTGLLCH). The O-linked (Glc...) serine glycan is linked to Ser-341. O-linked (Fuc...) threonine glycosylation occurs at Thr-349. Residues 372–410 (LNDACISNPCNEGSNCDTNPVNGKAICTCPSGYTGPACS) enclose the EGF-like 10 domain. O-linked (Glc...) serine glycosylation occurs at Ser-378. The EGF-like 11; calcium-binding domain occupies 412–450 (DVDECALGANPCEHAGKCLNTLGSFECQCLQGYTGPRCE). An interaction with DLL4 region spans residues 420-421 (AN). Ca(2+) is bound by residues Thr-432 and Ser-435. The O-linked (Glc...) serine glycan is linked to Ser-435. The interval 448–452 (RCEID) is interaction with DLL4. Residues Asp-452, Val-453, and Glu-455 each contribute to the Ca(2+) site. Residues 452–488 (DVNECISNPCQNDATCLDQIGEFQCICMPGYEGVYCE) form the EGF-like 12; calcium-binding domain. Cystine bridges form between Cys-456-Cys-467, Cys-461-Cys-476, and Cys-478-Cys-487. O-linked (Glc...) serine glycosylation occurs at Ser-458. O-linked (Fuc...) threonine glycosylation occurs at Thr-466. Residues Asp-469 and Gln-470 each contribute to the Ca(2+) site. Ca(2+) contacts are provided by Asn-490, Thr-491, and Glu-493. Positions 490 to 526 (NTDECASSPCLHNGRCVDKINEFLCQCPKGFSGHLCQ) constitute an EGF-like 13; calcium-binding domain. 75 disulfides stabilise this stretch: Cys-494/Cys-505, Cys-499/Cys-514, Cys-516/Cys-525, Cys-532/Cys-543, Cys-537/Cys-552, Cys-554/Cys-563, Cys-570/Cys-580, Cys-575/Cys-589, Cys-591/Cys-600, Cys-607/Cys-618, Cys-612/Cys-627, Cys-629/Cys-638, Cys-645/Cys-655, Cys-650/Cys-664, Cys-666/Cys-675, Cys-682/Cys-693, Cys-687/Cys-702, Cys-704/Cys-713, Cys-720/Cys-730, Cys-725/Cys-739, Cys-741/Cys-750, Cys-757/Cys-768, Cys-762/Cys-777, Cys-779/Cys-788, Cys-795/Cys-806, Cys-800/Cys-815, Cys-817/Cys-826, Cys-833/Cys-844, Cys-838/Cys-855, Cys-857/Cys-866, Cys-873/Cys-884, Cys-878/Cys-893, Cys-895/Cys-904, Cys-911/Cys-922, Cys-916/Cys-931, Cys-933/Cys-942, Cys-949/Cys-960, Cys-954/Cys-969, Cys-971/Cys-980, Cys-987/Cys-998, Cys-992/Cys-1007, Cys-1009/Cys-1018, Cys-1025/Cys-1036, Cys-1030/Cys-1045, Cys-1047/Cys-1056, Cys-1063/Cys-1074, Cys-1068/Cys-1083, Cys-1085/Cys-1094, Cys-1101/Cys-1122, Cys-1116/Cys-1131, Cys-1133/Cys-1142, Cys-1149/Cys-1160, Cys-1154/Cys-1169, Cys-1171/Cys-1180, Cys-1187/Cys-1198, Cys-1192/Cys-1207, Cys-1209/Cys-1218, Cys-1225/Cys-1244, Cys-1238/Cys-1253, Cys-1255/Cys-1264, Cys-1271/Cys-1284, Cys-1276/Cys-1293, Cys-1295/Cys-1304, Cys-1311/Cys-1322, Cys-1316/Cys-1334, Cys-1336/Cys-1345, Cys-1352/Cys-1363, Cys-1357/Cys-1372, Cys-1374/Cys-1383, Cys-1391/Cys-1403, Cys-1397/Cys-1414, Cys-1416/Cys-1425, Cys-1449/Cys-1472, Cys-1454/Cys-1467, and Cys-1463/Cys-1479. The O-linked (Glc...) serine glycan is linked to Ser-496. Ca(2+) contacts are provided by Asp-507 and Lys-508. Residues 528-564 (DVDECASTPCKNGAKCLDGPNTYTCVCTEGYTGTHCE) enclose the EGF-like 14; calcium-binding domain. Ser-534 is a glycosylation site (O-linked (Glc...) serine). Residues 566–601 (DIDECDPDPCHYGLCKDGVATFTCLCQPGYTGHHCE) enclose the EGF-like 15; calcium-binding domain. Residues 603-639 (NINECHSQPCRHGGTCQDRDNYYLCLCLKGTTGPNCE) form the EGF-like 16; calcium-binding domain. Residue Ser-609 is glycosylated (O-linked (Glc...) serine). Thr-617 is a glycosylation site (O-linked (Fuc...) threonine). The region spanning 641 to 676 (NLDDCASNPCDSGTCLDKIDGYECACEPGYTGSMCN) is the EGF-like 17; calcium-binding domain. A glycan (O-linked (Glc...) serine) is linked at Ser-647. One can recognise an EGF-like 18; calcium-binding domain in the interval 678 to 714 (NIDECAGSPCHNGGTCEDGIAGFTCRCPEGYHDPTCL). The O-linked (Fuc...) threonine glycan is linked to Thr-692. Residues 716 to 751 (EVNECNSNPCIHGACRDGLNGYKCDCAPGWSGTNCD) form the EGF-like 19; calcium-binding domain. Ser-722 carries O-linked (Glc...) serine glycosylation. Residues 753–789 (NNNECESNPCVNGGTCKDMTSGYVCTCREGFSGPNCQ) form the EGF-like 20; calcium-binding domain. Residue Ser-759 is glycosylated (O-linked (Glc...) serine). A glycan (O-linked (Fuc...) threonine) is linked at Thr-767. A glycan (O-linked (GlcNAc) serine) is linked at Ser-784. The EGF-like 21; calcium-binding domain maps to 791–827 (NINECASNPCLNQGTCIDDVAGYKCNCPLPYTGATCE). O-linked (Glc...) serine glycosylation occurs at Ser-797. An O-linked (Fuc...) threonine glycan is attached at Thr-805. The region spanning 829-867 (VLAPCATSPCKNSGVCKESEDYESFSCVCPTGWQGQTCE) is the EGF-like 22 domain. Residues 869–905 (DINECVKSPCRHGASCQNTNGSYRCLCQAGYTGRNCE) form the EGF-like 23; calcium-binding domain. N-linked (GlcNAc...) asparagine glycosylation is present at Asn-888. An O-linked (GlcNAc) threonine glycan is attached at Thr-900. The EGF-like 24 domain maps to 907–943 (DIDDCRPNPCHNGGSCTDGVNAAFCDCLPGFQGAFCE). The O-linked (Fuc) serine glycan is linked to Ser-921. The EGF-like 25; calcium-binding domain occupies 945–981 (DINECASNPCQNGANCTDCVDSYTCTCPTGFNGIHCE). An O-linked (Glc...) serine glycan is attached at Ser-951. Asn-959 carries N-linked (GlcNAc...) asparagine glycosylation. The EGF-like 26 domain maps to 983–1019 (NTPDCTESSCFNGGTCVDGINSFTCLCPPGFTGSYCQ). Residue Thr-997 is glycosylated (O-linked (Fuc...) threonine). The EGF-like 27; calcium-binding domain occupies 1021-1057 (DVNECDSRPCLHGGTCQDSYGTYKCTCPQGYTGLNCQ). A glycan (O-linked (Glc...) serine) is linked at Ser-1027. Thr-1035 is a glycosylation site (O-linked (Fuc...) threonine). 2 EGF-like domains span residues 1059–1095 (LVRW…FNCD) and 1097–1143 (LSVS…SYCE). Residue Ser-1065 is glycosylated (O-linked (Glc...) serine). The region spanning 1145–1181 (EVDECSPNPCQNGATCTDYLGGFSCKCVAGYHGSNCS) is the EGF-like 30; calcium-binding domain. Residue Thr-1159 is glycosylated (O-linked (Fuc...) threonine). Residue Asn-1179 is glycosylated (N-linked (GlcNAc...) asparagine). The region spanning 1183-1219 (EINECLSQPCQNGGTCIDLTNTYKCSCPRGTQGVHCE) is the EGF-like 31; calcium-binding domain. Residue Ser-1189 is glycosylated (O-linked (Glc...) serine). Thr-1197 carries O-linked (Fuc...) threonine glycosylation. The EGF-like 32; calcium-binding domain occupies 1221 to 1265 (NVDDCHPPLDPASRSPKCFNNGTCVDQVGGYTCTCPPGFVGERCE). The N-linked (GlcNAc...) asparagine glycan is linked to Asn-1241. EGF-like domains lie at 1267-1305 (DVNE…RRCE), 1307-1346 (VING…ATCE), 1348-1384 (DART…PECQ), and 1387-1426 (ASSP…LLCH). O-linked (Glc...) serine glycosylation occurs at Ser-1273. Residue Thr-1362 is glycosylated (O-linked (Fuc...) threonine). An O-linked (GlcNAc...) threonine glycan is attached at Thr-1379. Thr-1402 carries an O-linked (Fuc...) threonine; alternate glycan. Thr-1402 is a glycosylation site (O-linked (GalNAc...) threonine; alternate). LNR repeat units lie at residues 1449–1489 (CELP…PWKN), 1490–1531 (CTQS…CNPL), and 1532–1571 (YDQY…RLAA). Residues Asp-1457, Asn-1460, Asp-1475, and Asp-1478 each contribute to the Ca(2+) site. An N-linked (GlcNAc...) asparagine glycan is attached at Asn-1489. Disulfide bonds link Cys-1490/Cys-1514, Cys-1496/Cys-1509, Cys-1505/Cys-1521, Cys-1536/Cys-1549, and Cys-1545/Cys-1561. Asn-1587 carries an N-linked (GlcNAc...) asparagine glycan. Thr-1715 carries an O-linked (GalNAc...) threonine glycan. An interaction with PSEN1 region spans residues 1718-1750 (PPLPSQLHLMYVAAAAFVLLFFVGCGVLLSRKR). Residues 1726–1746 (LMYVAAAAFVLLFFVGCGVLL) traverse the membrane as a helical segment. Over 1747–2531 (SRKRRRQHGQ…QITHIPEAFK (785 aa)) the chain is Cytoplasmic. Residue Lys-1749 forms a Glycyl lysine isopeptide (Lys-Gly) (interchain with G-Cter in ubiquitin) linkage. Residues 1770 to 1798 (KKKRREPLGEDSVGLKPLKNASDGALMDD) are disordered. Phosphothreonine is present on Thr-1851. ANK repeat units follow at residues 1917–1946 (TGET…DANI), 1950–1980 (MGRT…DLDA), 1984–2013 (DGTT…DVNA), 2017–2046 (LGKS…NKDM), and 2050–2079 (KEET…NRDI). The tract at residues 1937–1945 (LLEASADAN) is HIF1AN-binding. The residue at position 1945 (Asn-1945) is a (3S)-3-hydroxyasparagine; by HIF1AN. The tract at residues 2004 to 2012 (LINSHADVN) is HIF1AN-binding. Residue Asn-2012 is modified to (3S)-3-hydroxyasparagine; by HIF1AN. Disordered stretches follow at residues 2141-2185 (SATQ…DSSS), 2382-2428 (QPQN…SLPV), and 2440-2531 (PTSL…EAFK). The span at 2382–2395 (QPQNLQPPSQPHLS) shows a compositional bias: low complexity. The segment covering 2440-2478 (PTSLPSSMVPPMTTTQFLTPPSQHSYSSSPVDNTPSHQL) has biased composition (polar residues). Over residues 2488–2503 (PSPESPDQWSSSSPHS) the composition is skewed to low complexity. Polar residues predominate over residues 2504 to 2524 (NISDWSEGISSPPTSMPSQIT).

Belongs to the NOTCH family. In terms of assembly, heterodimer of a C-terminal fragment N(TM) and an N-terminal fragment N(EC) which are probably linked by disulfide bonds. Interacts with DNER, DTX1, DTX2 and RBPJ/RBPSUH. Also interacts with MAML1, MAML2 and MAML3 which act as transcriptional coactivators for NOTCH1. Notch 1 intracellular domain interacts with SNW1; the interaction involves multimerized NOTCH1 NICD and is implicated in a formation of an intermediate preactivation complex which associates with DNA-bound CBF-1/RBPJ. The activated membrane-bound form interacts with AAK1 which promotes NOTCH1 stabilization. Forms a trimeric complex with FBXW7 and SGK1. Interacts with HIF1AN. HIF1AN negatively regulates the function of notch intracellular domain (NICD), accelerating myogenic differentiation. Interacts (via NICD) with SNAI1 (via zinc fingers); the interaction induces SNAI1 degradation via MDM2-mediated ubiquitination and inhibits SNAI1-induced cell invasion. Interacts (via NICD) with MDM2A. Interacts (via NICD) with BCL6; the interaction decreases MAML1 recruitment by NOTCH1 NICD on target genes DNA and inhibits NOTCH1 transactivation activity. Interacts with THBS4. Interacts (via the EGF-like repeat region) with CCN3 (via CTCK domain). Interacts (via EGF-like domains) with DLL4 (via N-terminal DSL and MNNL domains). Interacts with ZMIZ1. Interacts (via NICD domain) with MEGF10 (via the cytoplasmic domain). Interacts with DLL1 and JAG1. Interacts (via NICD domain) with PRAG1. Forms a complex with PRAG1, N1ICD and MAML1, in a MAML1-dependent manner. Interacts (via transmembrane region) with PSEN1; the interaction is direct. Interacts with ZFP64. In terms of processing, synthesized in the endoplasmic reticulum as an inactive form which is proteolytically cleaved by a furin-like convertase in the trans-Golgi network before it reaches the plasma membrane to yield an active, ligand-accessible form. Cleavage results in a C-terminal fragment N(TM) and a N-terminal fragment N(EC). Following ligand binding, it is cleaved by ADAM17 to yield a membrane-associated intermediate fragment called notch extracellular truncation (NEXT). Following endocytosis, this fragment is then cleaved by one of the catalytic subunits of gamma-secretase (PSEN1 or PSEN2) to release a Notch-derived peptide containing the intracellular domain (NICD) from the membrane. Post-translationally, phosphorylated. O-glycosylated on the EGF-like domains. O-glucosylated at Ser-435 by KDELC1 and KDELC2. Contains both O-linked fucose and O-linked glucose in the EGF-like domains 11, 12 and 13, which are interacting with the residues on DLL4. O-linked glycosylation by GALNT11 is involved in determination of left/right symmetry: glycosylation promotes activation of NOTCH1, possibly by promoting cleavage by ADAM17, modulating the balance between motile and immotile (sensory) cilia at the left-right organiser (LRO). MFNG-, RFNG- and LFNG-mediated modification of O-fucose residues at specific EGF-like domains results in inhibition of its activation by JAG1 and enhancement of its activation by DLL1 via an increased binding to DLL1. In terms of processing, ubiquitinated. Undergoes 'Lys-29'-linked polyubiquitination by ITCH; promotes the lysosomal degradation of non-activated internalized NOTCH1. Deubiquitination by USP12 is required for transport of internalized non-activated receptor from late endosomes to lysosomes for degradation. Monoubiquitination at Lys-1749 is required for activation by gamma-secretase cleavage, it promotes interaction with AAK1, which stabilizes it. Deubiquitination by EIF3F is necessary for nuclear import of activated Notch. Post-translationally, hydroxylated at Asn-1945 and Asn-2012 by HIF1AN. Hydroxylation reduces affinity for HI1AN and may thus indirectly modulate negative regulation of NICD. In terms of tissue distribution, expressed in the brain, kidney and spleen. Expressed in postnatal central nervous system (CNS) germinal zones and, in early postnatal life, within numerous cells throughout the CNS. Found in both subventricular and ventricular germinal zones.

The protein resides in the cell membrane. Its subcellular location is the late endosome membrane. The protein localises to the nucleus. Functionally, functions as a receptor for membrane-bound ligands Jagged-1 (JAG1), Jagged-2 (JAG2) and Delta-1 (DLL1) to regulate cell-fate determination. Upon ligand activation through the released notch intracellular domain (NICD) it forms a transcriptional activator complex with RBPJ/RBPSUH and activates genes of the enhancer of split locus. Affects the implementation of differentiation, proliferation and apoptotic programs. Involved in angiogenesis; negatively regulates endothelial cell proliferation and migration and angiogenic sprouting. Involved in the maturation of both CD4(+) and CD8(+) cells in the thymus. Important for follicular differentiation and possibly cell fate selection within the follicle. During cerebellar development, functions as a receptor for neuronal DNER and is involved in the differentiation of Bergmann glia. Represses neuronal and myogenic differentiation. May play an essential role in postimplantation development, probably in some aspect of cell specification and/or differentiation. May be involved in mesoderm development, somite formation and neurogenesis. May enhance HIF1A function by sequestering HIF1AN away from HIF1A. Required for the THBS4 function in regulating protective astrogenesis from the subventricular zone (SVZ) niche after injury. Involved in determination of left/right symmetry by modulating the balance between motile and immotile (sensory) cilia at the left-right organiser (LRO). This Rattus norvegicus (Rat) protein is Neurogenic locus notch homolog protein 1 (Notch1).